Reading from the N-terminus, the 200-residue chain is ATP synthase subunit s, mitochondrial (200 aa).

Residues 1 to 25 (MMPFGKISQQLCGVKKLPWSCDSRY) constitute a mitochondrion transit peptide. The N-terminal domain stretch occupies residues 1–61 (MMPFGKISQQ…SEWLLRCGAM (61 aa)). Gly59 is a Mg(2+) binding site. LRR repeat units lie at residues 62–87 (VRYH…KYKI), 88–116 (QAID…KIRL), 117–141 (CKCH…KTIL), and 142–173 (EMEI…LSDL). Residue Thr93 coordinates Mg(2+).

It belongs to the ATP synthase subunit s family. As to quaternary structure, homotetramer. Associates with ATP synthase.

Its subcellular location is the mitochondrion. The protein resides in the mitochondrion inner membrane. Its function is as follows. Involved in regulation of mitochondrial membrane ATP synthase. Necessary for H(+) conduction of ATP synthase. Facilitates energy-driven catalysis of ATP synthesis by blocking a proton leak through an alternative proton exit pathway. This Homo sapiens (Human) protein is ATP synthase subunit s, mitochondrial.